Consider the following 621-residue polypeptide: Methionine--tRNA ligase (621 aa).

The 'HIGH' region signature appears at 11-21; it reads PYANGPRHIGH. Residues cysteine 143, cysteine 146, cysteine 156, and cysteine 159 each coordinate Zn(2+). The 'KMSKS' region signature appears at 347 to 351; it reads KFSSS. Serine 350 contacts ATP.

It belongs to the class-I aminoacyl-tRNA synthetase family. MetG type 1 subfamily. As to quaternary structure, monomer. The cofactor is Zn(2+).

The protein resides in the cytoplasm. The catalysed reaction is tRNA(Met) + L-methionine + ATP = L-methionyl-tRNA(Met) + AMP + diphosphate. Its function is as follows. Is required not only for elongation of protein synthesis but also for the initiation of all mRNA translation through initiator tRNA(fMet) aminoacylation. This Bifidobacterium longum subsp. infantis (strain ATCC 15697 / DSM 20088 / JCM 1222 / NCTC 11817 / S12) protein is Methionine--tRNA ligase.